We begin with the raw amino-acid sequence, 227 residues long: Cytidylate kinase (227 aa).

12-20 (GPSGAGKGT) contributes to the ATP binding site.

Belongs to the cytidylate kinase family. Type 1 subfamily.

It is found in the cytoplasm. It catalyses the reaction CMP + ATP = CDP + ADP. It carries out the reaction dCMP + ATP = dCDP + ADP. In Shigella flexneri, this protein is Cytidylate kinase.